Consider the following 469-residue polypeptide: Adenosylhomocysteinase (469 aa).

Residues Thr-63, Asp-139, and Glu-164 each coordinate substrate. 165-167 (TTT) contributes to the NAD(+) binding site. Substrate contacts are provided by Lys-194 and Asp-198. NAD(+)-binding positions include Asn-199, 228-233 (GYGDVG), Glu-251, Asn-300, 321-323 (IGH), and Asn-375.

The protein belongs to the adenosylhomocysteinase family. It depends on NAD(+) as a cofactor.

The protein localises to the cytoplasm. The catalysed reaction is S-adenosyl-L-homocysteine + H2O = L-homocysteine + adenosine. Its pathway is amino-acid biosynthesis; L-homocysteine biosynthesis; L-homocysteine from S-adenosyl-L-homocysteine: step 1/1. In terms of biological role, may play a key role in the regulation of the intracellular concentration of adenosylhomocysteine. The protein is Adenosylhomocysteinase of Pseudomonas fluorescens (strain ATCC BAA-477 / NRRL B-23932 / Pf-5).